Reading from the N-terminus, the 99-residue chain is Transcriptional repressor PagR (99 aa).

An HTH arsR-type domain is found at 9-99; the sequence is IEYMSLEDDA…GIIKLLNPIQ (91 aa). The H-T-H motif DNA-binding region spans 43–62; that stretch reads NVTQIIQILKLPQSTVSQHL.

Its function is as follows. Represses the expression of the pagA and atxA genes. In Bacillus anthracis, this protein is Transcriptional repressor PagR (pagR).